The following is a 165-amino-acid chain: 2-C-methyl-D-erythritol 2,4-cyclodiphosphate synthase (165 aa).

Residues D8 and H10 each contribute to the a divalent metal cation site. 4-CDP-2-C-methyl-D-erythritol 2-phosphate-binding positions include 8–10 (DVH) and 34–35 (HS). H42 contributes to the a divalent metal cation binding site. 4-CDP-2-C-methyl-D-erythritol 2-phosphate-binding positions include 56–58 (DIG), 61–65 (FPDTD), 132–135 (TTTE), F139, and R142.

The protein belongs to the IspF family. As to quaternary structure, homotrimer. It depends on a divalent metal cation as a cofactor.

The catalysed reaction is 4-CDP-2-C-methyl-D-erythritol 2-phosphate = 2-C-methyl-D-erythritol 2,4-cyclic diphosphate + CMP. It functions in the pathway isoprenoid biosynthesis; isopentenyl diphosphate biosynthesis via DXP pathway; isopentenyl diphosphate from 1-deoxy-D-xylulose 5-phosphate: step 4/6. In terms of biological role, involved in the biosynthesis of isopentenyl diphosphate (IPP) and dimethylallyl diphosphate (DMAPP), two major building blocks of isoprenoid compounds. Catalyzes the conversion of 4-diphosphocytidyl-2-C-methyl-D-erythritol 2-phosphate (CDP-ME2P) to 2-C-methyl-D-erythritol 2,4-cyclodiphosphate (ME-CPP) with a corresponding release of cytidine 5-monophosphate (CMP). The chain is 2-C-methyl-D-erythritol 2,4-cyclodiphosphate synthase from Halothermothrix orenii (strain H 168 / OCM 544 / DSM 9562).